The sequence spans 37 residues: Large ribosomal subunit protein bL36 (37 aa).

It belongs to the bacterial ribosomal protein bL36 family.

The sequence is that of Large ribosomal subunit protein bL36 from Hydrogenobaculum sp. (strain Y04AAS1).